Here is a 65-residue protein sequence, read N- to C-terminus: Ferredoxin-like protein in vnf region (65 aa).

4Fe-4S ferredoxin-type domains are found at residues 2-29 (AMAIDGYECTVCGDCKPVCPTGSIVLQG) and 30-65 (GIYVIDADSCNECADLGEPRCLGVCPVDFCIQPLDD). [4Fe-4S] cluster is bound by residues Cys10, Cys13, Cys16, Cys20, Cys39, Cys42, Cys50, and Cys54.

It depends on [4Fe-4S] cluster as a cofactor.

The polypeptide is Ferredoxin-like protein in vnf region (Azotobacter chroococcum mcd 1).